A 529-amino-acid chain; its full sequence is uncharacterized protein (529 aa).

Residues 1 to 11 (MSSSKIKELRE) show a composition bias toward basic and acidic residues. Disordered regions lie at residues 1 to 222 (MSSS…IPYS), 237 to 256 (PFLE…EENV), 271 to 372 (AFLQ…TAAP), and 393 to 488 (GSGN…PSFT). The span at 27-40 (MQQNQPRPATTTPP) shows a compositional bias: polar residues. Basic residues predominate over residues 83–95 (TKGRAHPRSRRPP). Over residues 110–125 (NTGSTKAADTKSSVEA) the composition is skewed to polar residues. Serine 128 bears the Phosphoserine mark. Polar residues predominate over residues 170 to 199 (TTKAVEATTSKASSAHTDTLATSASNSDRG). At serine 217 the chain carries Phosphoserine. The span at 237 to 249 (PFLESKVLPQNNE) shows a compositional bias: polar residues. Residues 321-334 (SSPLSFSASKSPAA) show a composition bias toward low complexity. Polar residues predominate over residues 336–362 (DSSTKTPTEQVNVVSKQAPTTSSTSVI). Positions 409–426 (ERTKSLSKESPVEPEKPA) are enriched in basic and acidic residues. Positions 430–455 (ATSSSTPTTENKESWTNQGIKSSQQR) are enriched in polar residues. The span at 456 to 470 (SANASPATSPSNQAS) shows a compositional bias: low complexity. The span at 471–488 (IHASFTKESSTHSSPSFT) shows a compositional bias: polar residues.

The protein localises to the cytoplasm. This is an uncharacterized protein from Schizosaccharomyces pombe (strain 972 / ATCC 24843) (Fission yeast).